A 428-amino-acid chain; its full sequence is Elongation factor 1-alpha (428 aa).

The tr-type G domain occupies 5-225 (KPILNVAFIG…DAFQPPEKPT (221 aa)). Residues 14–21 (GHVDAGKS) are G1. 14–21 (GHVDAGKS) lines the GTP pocket. S21 serves as a coordination point for Mg(2+). A G2 region spans residues 70 to 74 (GVTID). A G3 region spans residues 91–94 (DCPG). Residues 91-95 (DCPGH) and 149-152 (NKMD) contribute to the GTP site. A G4 region spans residues 149–152 (NKMD). Residues 189–191 (ASL) are G5.

The protein belongs to the TRAFAC class translation factor GTPase superfamily. Classic translation factor GTPase family. EF-Tu/EF-1A subfamily.

The protein resides in the cytoplasm. It catalyses the reaction GTP + H2O = GDP + phosphate + H(+). Functionally, GTP hydrolase that promotes the GTP-dependent binding of aminoacyl-tRNA to the A-site of ribosomes during protein biosynthesis. In Methanococcus maripaludis (strain C7 / ATCC BAA-1331), this protein is Elongation factor 1-alpha.